Here is an 820-residue protein sequence, read N- to C-terminus: Mitogen-activated protein kinase kinase kinase kinase 2 (820 aa).

The region spanning F16 to T273 is the Protein kinase domain. ATP contacts are provided by residues V22–V30 and K45. D136 (proton acceptor) is an active-site residue. Residues L294–I314 form a PEST1 region. The residue at position 328 (S328) is a Phosphoserine. The PEST2 stretch occupies residues E344 to G360. The segment at S387–P442 is disordered. Residue S394 is modified to Phosphoserine. The interval A405–M448 is PEST3. Positions S422 to G434 are enriched in pro residues. The 312-residue stretch at P482–D793 folds into the CNH domain.

It belongs to the protein kinase superfamily. STE Ser/Thr protein kinase family. STE20 subfamily. Interacts with TRAF2, TRAF6, MAP3K1/MEKK1 and MAP3K11/MLK3. Interacts with RAB8A. Mg(2+) is required as a cofactor. In terms of processing, polyubiquitinated through 'Lys-48'-polyubiquitin chains, allowing proteasomal turnover. Ubiquitination requires the kinase activity of MAP4K2/GCK. Autophosphorylated in response to tumor necrosis factor (TNF), endotoxins or pro-inflammatory stimuli. Autophosphorylation leads to activation. As to expression, highly expressed in germinal center but not mantle zone B-cells. Also expressed in lung, brain and placenta and at lower levels in other tissues examined.

It localises to the cytoplasm. The protein resides in the basolateral cell membrane. It is found in the golgi apparatus membrane. The catalysed reaction is L-seryl-[protein] + ATP = O-phospho-L-seryl-[protein] + ADP + H(+). The enzyme catalyses L-threonyl-[protein] + ATP = O-phospho-L-threonyl-[protein] + ADP + H(+). With respect to regulation, the tumor necrosis factor (TNF), as well as endotoxins and pro-inflammatory stimuli such as polyinosine-polycytidine (poly(IC)), lipopolysaccharides (LPS), peptidoglycan (PGN), flagellin, or lipid A activate MAP4K2 by promoting its autophosphorylation. Its function is as follows. Serine/threonine-protein kinase which acts as an essential component of the MAP kinase signal transduction pathway. Acts as a MAPK kinase kinase kinase (MAP4K) and is an upstream activator of the stress-activated protein kinase/c-Jun N-terminal kinase (SAP/JNK) signaling pathway and to a lesser extent of the p38 MAPKs signaling pathway. Required for the efficient activation of JNKs by TRAF6-dependent stimuli, including pathogen-associated molecular patterns (PAMPs) such as polyinosine-polycytidine (poly(IC)), lipopolysaccharides (LPS), lipid A, peptidoglycan (PGN), or bacterial flagellin. To a lesser degree, IL-1 and engagement of CD40 also stimulate MAP4K2-mediated JNKs activation. The requirement for MAP4K2/GCK is most pronounced for LPS signaling, and extends to LPS stimulation of c-Jun phosphorylation and induction of IL-8. Enhances MAP3K1 oligomerization, which may relieve N-terminal mediated MAP3K1 autoinhibition and lead to activation following autophosphorylation. Also mediates the SAP/JNK signaling pathway and the p38 MAPKs signaling pathway through activation of the MAP3Ks MAP3K10/MLK2 and MAP3K11/MLK3. May play a role in the regulation of vesicle targeting or fusion. regulation of vesicle targeting or fusion. Activator of the Hippo signaling pathway which plays a pivotal role in organ size control and tumor suppression by restricting proliferation and promoting apoptosis. MAP4Ks act in parallel to and are partially redundant with STK3/MST2 and STK4/MST2 in the phosphorylation and activation of LATS1/2, and establish MAP4Ks as components of the expanded Hippo pathway. In Homo sapiens (Human), this protein is Mitogen-activated protein kinase kinase kinase kinase 2.